The primary structure comprises 143 residues: Large-conductance mechanosensitive channel (143 aa).

A run of 2 helical transmembrane segments spans residues 19–39 and 81–101; these read VGVIIGAAFGAIVTSMVGDLI and GSFLTITLNFLIVAGVLFGVI.

This sequence belongs to the MscL family. As to quaternary structure, homopentamer.

The protein resides in the cell inner membrane. Functionally, channel that opens in response to stretch forces in the membrane lipid bilayer. May participate in the regulation of osmotic pressure changes within the cell. The protein is Large-conductance mechanosensitive channel of Rhodopseudomonas palustris (strain BisB5).